The primary structure comprises 782 residues: Endonuclease MutS2 (782 aa).

336–343 lines the ATP pocket; sequence GPNTGGKT. Positions 707–782 constitute a Smr domain; it reads LDLRGYRYEE…GFGVTVAELK (76 aa).

It belongs to the DNA mismatch repair MutS family. MutS2 subfamily. As to quaternary structure, homodimer. Binds to stalled ribosomes, contacting rRNA.

In terms of biological role, endonuclease that is involved in the suppression of homologous recombination and thus may have a key role in the control of bacterial genetic diversity. Functionally, acts as a ribosome collision sensor, splitting the ribosome into its 2 subunits. Detects stalled/collided 70S ribosomes which it binds and splits by an ATP-hydrolysis driven conformational change. Acts upstream of the ribosome quality control system (RQC), a ribosome-associated complex that mediates the extraction of incompletely synthesized nascent chains from stalled ribosomes and their subsequent degradation. Probably generates substrates for RQC. This is Endonuclease MutS2 from Staphylococcus epidermidis (strain ATCC 12228 / FDA PCI 1200).